A 198-amino-acid polypeptide reads, in one-letter code: Holliday junction branch migration complex subunit RuvA (198 aa).

The interval M1–H63 is domain I. The segment at T64–K142 is domain II. The tract at residues A143–K147 is flexible linker. The segment at A148–G198 is domain III.

It belongs to the RuvA family. In terms of assembly, homotetramer. Forms an RuvA(8)-RuvB(12)-Holliday junction (HJ) complex. HJ DNA is sandwiched between 2 RuvA tetramers; dsDNA enters through RuvA and exits via RuvB. An RuvB hexamer assembles on each DNA strand where it exits the tetramer. Each RuvB hexamer is contacted by two RuvA subunits (via domain III) on 2 adjacent RuvB subunits; this complex drives branch migration. In the full resolvosome a probable DNA-RuvA(4)-RuvB(12)-RuvC(2) complex forms which resolves the HJ.

It localises to the cytoplasm. Its function is as follows. The RuvA-RuvB-RuvC complex processes Holliday junction (HJ) DNA during genetic recombination and DNA repair, while the RuvA-RuvB complex plays an important role in the rescue of blocked DNA replication forks via replication fork reversal (RFR). RuvA specifically binds to HJ cruciform DNA, conferring on it an open structure. The RuvB hexamer acts as an ATP-dependent pump, pulling dsDNA into and through the RuvAB complex. HJ branch migration allows RuvC to scan DNA until it finds its consensus sequence, where it cleaves and resolves the cruciform DNA. This chain is Holliday junction branch migration complex subunit RuvA, found in Streptococcus pyogenes serotype M2 (strain MGAS10270).